A 256-amino-acid chain; its full sequence is Thiazole synthase (256 aa).

The active-site Schiff-base intermediate with DXP is the K96. Residues G157, 183-184 (AG), and 205-206 (NT) each bind 1-deoxy-D-xylulose 5-phosphate.

It belongs to the ThiG family. In terms of assembly, homotetramer. Forms heterodimers with either ThiH or ThiS.

It localises to the cytoplasm. It carries out the reaction [ThiS sulfur-carrier protein]-C-terminal-Gly-aminoethanethioate + 2-iminoacetate + 1-deoxy-D-xylulose 5-phosphate = [ThiS sulfur-carrier protein]-C-terminal Gly-Gly + 2-[(2R,5Z)-2-carboxy-4-methylthiazol-5(2H)-ylidene]ethyl phosphate + 2 H2O + H(+). The protein operates within cofactor biosynthesis; thiamine diphosphate biosynthesis. Its function is as follows. Catalyzes the rearrangement of 1-deoxy-D-xylulose 5-phosphate (DXP) to produce the thiazole phosphate moiety of thiamine. Sulfur is provided by the thiocarboxylate moiety of the carrier protein ThiS. In vitro, sulfur can be provided by H(2)S. The protein is Thiazole synthase of Bacillus cereus (strain G9842).